The chain runs to 149 residues: Aquaporin-like protein 2 (149 aa).

A disordered region spans residues 1 to 35; that stretch reads MSNESNDLEKNISHLDPTGVDNAYIPPEQPETKHS. Residues 1–47 are Cytoplasmic-facing; the sequence is MSNESNDLEKNISHLDPTGVDNAYIPPEQPETKHSRFNIDRDTLRNH. The chain crosses the membrane as a helical span at residues 48 to 68; it reads FIAAVGEFCGTFMFLWCAYVI. Topologically, residues 69 to 89 are extracellular; the sequence is CNVANHDVALTTEPEGSHPGQ. The chain crosses the membrane as a helical span at residues 90 to 110; it reads LIMIALGFGFSVMFSIWCFWW. At 111–149 the chain is on the cytoplasmic side; sequence GFEPSRFSLFVFGQSHLTSQMCSDVVSSDHCWDGCWWCR.

Belongs to the MIP/aquaporin (TC 1.A.8) family.

Its subcellular location is the endoplasmic reticulum membrane. It is found in the cell membrane. In terms of biological role, water channel required to facilitate the transport of water across membranes. Involved in freeze tolerance, osmotolerance and cell flocculation in liquid cultures. Is non-functional in most laboratory strains. The sequence is that of Aquaporin-like protein 2 (AQY2-2) from Saccharomyces cerevisiae (strain JAY291) (Baker's yeast).